The primary structure comprises 405 residues: Envelope glycoprotein M (405 aa).

Over 1–17 the chain is Intravirion; sequence MKSSKNDTFVYRTWVKT. The chain crosses the membrane as a helical span at residues 18–38; that stretch reads LVVYFVMFVMSAVVPITAMFP. The Virion surface portion of the chain corresponds to 39-76; sequence NLGYPCYFNALVDYGALNLTNYNLAHHLTPTLYLEPPE. The chain crosses the membrane as a helical span at residues 77 to 97; sequence MFVYITLVFIADCVAFIYYAC. Over 98 to 121 the chain is Intravirion; that stretch reads GEVALIKARKKVSGLTDLSAWVSA. A helical membrane pass occupies residues 122-142; that stretch reads VGSPTVLFLAILKLWSIQVFI. Residues 143–149 are Virion surface-facing; it reads QVLSYKH. A helical transmembrane segment spans residues 150 to 170; sequence VFLSAFVYFLHFLASVLHACA. Residues 171–192 are Intravirion-facing; that stretch reads CVTRFSPVWVVKAQDNSIPQDT. A helical transmembrane segment spans residues 193–215; the sequence is FLWWVVFYLKPVVTNLYLGCLAL. Residues 216–245 are Virion surface-facing; the sequence is ETLVFSLSVFLALGNSFYFMVGDMVLGAVN. Residues 246 to 266 form a helical membrane-spanning segment; that stretch reads LFLILPIFWYILTEVWLASFL. Arg-267 is a topological domain (intravirion). The chain crosses the membrane as a helical span at residues 268–288; that stretch reads HNFGFYCGMFIASIILILPLV. At 289–299 the chain is on the virion surface side; that stretch reads RYEAVFVSAKL. The helical transmembrane segment at 300-320 threads the bilayer; it reads HTTVAINVAIIPILCSVAMLI. The Intravirion portion of the chain corresponds to 321–405; that stretch reads RICRIFKSMR…TTDSEEEIFP (85 aa). A disordered region spans residues 346-405; sequence LESEPRPRPSRTPSPGRNRRRSSTSSSSSRSTRRQRPVSTQALVSSVLPMTTDSEEEIFP. A compositionally biased stretch (polar residues) spans 386–397; that stretch reads QALVSSVLPMTT.

Belongs to the herpesviridae glycoprotein M family. As to quaternary structure, interacts (via N-terminus) with gN (via N-terminus). The gM-gN heterodimer forms the gCII complex.

Its subcellular location is the virion membrane. It is found in the host Golgi apparatus. The protein resides in the host trans-Golgi network. It localises to the host endosome membrane. The protein localises to the host nucleus inner membrane. Its function is as follows. Envelope glycoprotein important for virion assembly and egress. Plays a role in the correct incorporation of gH-gL into virion membrane. Directs the glycoprotein N (gN) to the host trans-Golgi network. The polypeptide is Envelope glycoprotein M (Epstein-Barr virus (strain B95-8) (HHV-4)).